We begin with the raw amino-acid sequence, 847 residues long: E4 SUMO-protein ligase PIAL1 (847 aa).

The segment at 113–271 (VNSPVTLISQ…EVVGSNSDCD (159 aa)) is interacting domain (IND), required for interaction with MOM1 and PIAL2. An SP-RING-type zinc finger spans residues 268–349 (SDCDIIEGPS…LRKILEEVGR (82 aa)). Cysteine 299, histidine 301, cysteine 322, and cysteine 325 together coordinate Zn(2+). 7 consecutive repeat copies span residues 569 to 591 (QRPVPSYIAHPQTFHVNYGENAD), 592 to 614 (QRWMPSSIAHPQTLPVNYGGNTN), 615 to 637 (QRPIPSSIAHPQTLPVNYRGNTD), 638 to 659 (HRSTPYSITHLQTLLNYGGNAD), 660 to 682 (QRPMPSSITNLQTLPATYGGYAH), 683 to 705 (QRPMSSSITHPRTSPVNYGGTPD), and 706 to 728 (QRPMPSSITHPQTLPVSYGGTTD). Residues 569–728 (QRPVPSYIAH…LPVSYGGTTD (160 aa)) are 7 X 23 AA approximate tandem repeats.

Belongs to the PIAL protein ligase family. In terms of assembly, homodimer. Interacts with MOM1 and PIAL2 to form a high molecular mass complex which mediates transcriptional gene silencing at heterochromatin regions. In terms of tissue distribution, expressed in leaves, stems and flowers, and, at low levels, in siliques and old leaves.

It is found in the nucleus. It functions in the pathway protein modification; protein sumoylation. Its function is as follows. Together with MOM1 and PIAL2, regulates transcriptional gene silencing (TGS) independently of changes in DNA methylation. E4-type SUMO ligase that promotes SUMO chain formation in a SCE1-dependent manner and thus contributes to a pathway for proteolytic removal of sumoylation substrates. Involved in stress responses (e.g. osmotic, salt and abscisic acid ABA) and sulfur metabolism. The polypeptide is E4 SUMO-protein ligase PIAL1 (Arabidopsis thaliana (Mouse-ear cress)).